A 425-amino-acid polypeptide reads, in one-letter code: Glutamyl-tRNA reductase (425 aa).

Substrate-binding positions include 49-52 (TCNR), S107, 112-114 (EPQ), and Q118. The active-site Nucleophile is the C50. 187–192 (GAGETI) contacts NADP(+).

Belongs to the glutamyl-tRNA reductase family. As to quaternary structure, homodimer.

It catalyses the reaction (S)-4-amino-5-oxopentanoate + tRNA(Glu) + NADP(+) = L-glutamyl-tRNA(Glu) + NADPH + H(+). It participates in porphyrin-containing compound metabolism; protoporphyrin-IX biosynthesis; 5-aminolevulinate from L-glutamyl-tRNA(Glu): step 1/2. Catalyzes the NADPH-dependent reduction of glutamyl-tRNA(Glu) to glutamate 1-semialdehyde (GSA). The sequence is that of Glutamyl-tRNA reductase from Pseudomonas entomophila (strain L48).